Consider the following 201-residue polypeptide: dITP/XTP pyrophosphatase (201 aa).

Position 8-13 (8-13 (TTNENK)) interacts with substrate. The active-site Proton acceptor is D68. Residue D68 participates in Mg(2+) binding. Residues S69, 155–158 (FGYD), K177, and 182–183 (HR) each bind substrate.

This sequence belongs to the HAM1 NTPase family. In terms of assembly, homodimer. The cofactor is Mg(2+).

The catalysed reaction is XTP + H2O = XMP + diphosphate + H(+). It carries out the reaction dITP + H2O = dIMP + diphosphate + H(+). It catalyses the reaction ITP + H2O = IMP + diphosphate + H(+). In terms of biological role, pyrophosphatase that catalyzes the hydrolysis of nucleoside triphosphates to their monophosphate derivatives, with a high preference for the non-canonical purine nucleotides XTP (xanthosine triphosphate), dITP (deoxyinosine triphosphate) and ITP. Seems to function as a house-cleaning enzyme that removes non-canonical purine nucleotides from the nucleotide pool, thus preventing their incorporation into DNA/RNA and avoiding chromosomal lesions. This Borreliella burgdorferi (strain ATCC 35210 / DSM 4680 / CIP 102532 / B31) (Borrelia burgdorferi) protein is dITP/XTP pyrophosphatase.